The sequence spans 510 residues: Lysine-specific demethylase 4D (510 aa).

The JmjN domain maps to 15-57 (IMIFRPTKEEFNDFDKYIAYMESQGAHRAGLAKVIPPKEWRAR). 2 positions are modified to polyADP-ribosyl glutamic acid: Glu-23 and Glu-24. Tyr-133 serves as a coordination point for 2-oxoglutarate. Residues 143-309 (DGKTQQWNVG…YGKVASQCSC (167 aa)) enclose the JmjC domain. Positions 189 and 191 each coordinate Fe cation. 2 residues coordinate 2-oxoglutarate: Asn-199 and Lys-207. Positions 235 and 241 each coordinate Zn(2+). A 2-oxoglutarate-binding site is contributed by Lys-242. His-277 lines the Fe cation pocket. Cys-307 and Cys-309 together coordinate Zn(2+). A disordered region spans residues 397–510 (MCHTSRQAAD…ASEGGLTSDP (114 aa)). Basic and acidic residues predominate over residues 461-471 (RLPEGRDDRSP).

The protein belongs to the JHDM3 histone demethylase family. It depends on Fe(2+) as a cofactor. Post-translationally, ubiquitinated via 'Lys-63'-linked ubiquitin chains. Deubiquitinated by USP14 with the help of TRIM14 leading to stabilization.

It is found in the nucleus. It catalyses the reaction N(6),N(6),N(6)-trimethyl-L-lysyl(9)-[histone H3] + 2 2-oxoglutarate + 2 O2 = N(6)-methyl-L-lysyl(9)-[histone H3] + 2 formaldehyde + 2 succinate + 2 CO2. Functionally, histone demethylase that specifically demethylates 'Lys-9' of histone H3, thereby playing a central role in histone code. Does not demethylate histone H3 'Lys-4', H3 'Lys-27', H3 'Lys-36' nor H4 'Lys-20'. Demethylates both di- and trimethylated H3 'Lys-9' residue, while it has no activity on monomethylated residues. Demethylation of Lys residue generates formaldehyde and succinate. In Rattus norvegicus (Rat), this protein is Lysine-specific demethylase 4D (Kdm4d).